Here is a 250-residue protein sequence, read N- to C-terminus: Ribosomal RNA small subunit methyltransferase J (250 aa).

Residues 96–97 and D168 contribute to the S-adenosyl-L-methionine site; that span reads RD.

The protein belongs to the methyltransferase superfamily. RsmJ family.

The protein resides in the cytoplasm. The enzyme catalyses guanosine(1516) in 16S rRNA + S-adenosyl-L-methionine = N(2)-methylguanosine(1516) in 16S rRNA + S-adenosyl-L-homocysteine + H(+). In terms of biological role, specifically methylates the guanosine in position 1516 of 16S rRNA. This is Ribosomal RNA small subunit methyltransferase J from Neisseria meningitidis serogroup C / serotype 2a (strain ATCC 700532 / DSM 15464 / FAM18).